The chain runs to 488 residues: MNKPMEDAAITDVKKRYSAGVLKYRQMGYWMPDYVPKDTDTICLFRITPQDGVDPVEAAAAVAGESSTATWTVVWTDRLTACDSYRAKAYKVEPVPGIPGQFFAWVAYDIILFEEGSIANMTASLIGNVFSFKPLKAARLEDIRIPVAYVKTFKGPPTGLVVERERLDKFGRPLLGATTKPKLGLSGRNYGRVVYEGLKGGLDFMKDDENINSQPFMHWRDRYLYVMDAVNKASAATGEIKGSYLNVTAATMEDMYERAEFAKELGSVIVMIDLVIGYTAIQSMSNWARRNDVILHLHRAGHGTYTRQKNHGVSFRVIAKWMRLAGVDHIHTGTAVGKLEGDPMTVQGYYNVCRDSVTKQDLPRGLFFDQDWADLKKVMPVASGGIHAGQMHQLIDLFGDDVVLQFGGGTIGHPQGIQAGAVANRVALECMVKARNEGRDIKNEGPEILRKAAQFCAPLKQALDTWGEISFNYTPTDTSDYAVTPGVA.

Substrate-binding residues include Asn-128 and Thr-178. Residue Lys-180 is the Proton acceptor of the active site. Lys-182 lines the substrate pocket. 3 residues coordinate Mg(2+): Lys-206, Asp-208, and Glu-209. Lys-206 is modified (N6-carboxylysine). The active-site Proton acceptor is His-298. Substrate is bound by residues Arg-299, His-331, and Ser-383.

This sequence belongs to the RuBisCO large chain family. Type I subfamily. Heterohexadecamer of 8 large chains and 8 small chains. The cofactor is Mg(2+).

The catalysed reaction is 2 (2R)-3-phosphoglycerate + 2 H(+) = D-ribulose 1,5-bisphosphate + CO2 + H2O. It catalyses the reaction D-ribulose 1,5-bisphosphate + O2 = 2-phosphoglycolate + (2R)-3-phosphoglycerate + 2 H(+). In terms of biological role, ruBisCO catalyzes two reactions: the carboxylation of D-ribulose 1,5-bisphosphate, the primary event in carbon dioxide fixation, as well as the oxidative fragmentation of the pentose substrate. Both reactions occur simultaneously and in competition at the same active site. The sequence is that of Ribulose bisphosphate carboxylase large chain 1 from Methylibium petroleiphilum (strain ATCC BAA-1232 / LMG 22953 / PM1).